Reading from the N-terminus, the 353-residue chain is MACAGLLTVCLLGPPAPQQPRHSAPAAGHALFQDVFRRADKNDDGKLSFEEFQNYFADGVLSSAELRELFSGIDDHLTDNLETEKLCDYFSTHLGVYRPVLAALESLNRAVLTAMDTTKLEYEQASKVDQFVTRFLLRETVNQLQALQTSLEGASDTLEAQAHGQRLDEETIKAQSRPCGSRRAGRRALRSISWSPSWSPGSSDTGRSSEAEQQWRLQVNRLQELIDQLECKAPRLEPTHEEDLTKGFDSHILVAQRQVQVAEDALQDFHRALCCYMNFTGAQSHCLHVSAQKMLDNAAFTLYEFWQDEASWRRHQQSPCSKAFQRTLIDHLQAPDTLTTVFFPASWWIMNNN.

An EF-hand domain is found at 27–62; that stretch reads AGHALFQDVFRRADKNDDGKLSFEEFQNYFADGVLS. Ca(2+)-binding residues include D40, N42, D44, K46, and E51. Residues 172 to 181 are required for interaction with APBA3; that stretch reads IKAQSRPCGS. A compositionally biased stretch (low complexity) spans 193-203; the sequence is SWSPSWSPGSS. The disordered stretch occupies residues 193–213; that stretch reads SWSPSWSPGSSDTGRSSEAEQ. The segment covering 204 to 213 has biased composition (polar residues); that stretch reads DTGRSSEAEQ. The ABM domain occupies 253-342; the sequence is LVAQRQVQVA…QAPDTLTTVF (90 aa).

In terms of assembly, interacts with the N-terminal domain of APBA2. Interacts with NEK2. Interacts with APBA3; APBA3 seems to mediate the interaction between NECAB3 and HIF1AN. Phosphorylated by NEK2. As to expression, widely expressed, with highest levels in the brain.

The protein localises to the golgi apparatus. Inhibits the interaction of APBA2 with amyloid-beta precursor protein (APP), and hence allows formation of amyloid-beta. May enhance the activity of HIF1A and thus promote glycolysis under normoxic conditions; the function requires its ABM domain and may implicate the stabilization of the interaction between HIF1AN and APBA3. The sequence is that of N-terminal EF-hand calcium-binding protein 3 (Necab3) from Mus musculus (Mouse).